We begin with the raw amino-acid sequence, 293 residues long: Probable 2-(5''-triphosphoribosyl)-3'-dephosphocoenzyme-A synthase (293 aa).

The protein belongs to the CitG/MdcB family.

The enzyme catalyses 3'-dephospho-CoA + ATP = 2'-(5''-triphospho-alpha-D-ribosyl)-3'-dephospho-CoA + adenine. Its function is as follows. Involved in the formation of 2-(5''-phosphoribosyl)-3'-dephosphocoenzyme-A, the prosthetic group of the acyl-carrier protein of the malonate decarboxylase. This is Probable 2-(5''-triphosphoribosyl)-3'-dephosphocoenzyme-A synthase from Pseudomonas aeruginosa (strain UCBPP-PA14).